Here is a 340-residue protein sequence, read N- to C-terminus: tRNA N6-adenosine threonylcarbamoyltransferase (340 aa).

Fe cation is bound by residues H111 and H115. Substrate-binding positions include 134 to 138 (LVSGG), D167, G180, and N272. D300 contributes to the Fe cation binding site.

Belongs to the KAE1 / TsaD family. Fe(2+) is required as a cofactor.

It localises to the cytoplasm. The catalysed reaction is L-threonylcarbamoyladenylate + adenosine(37) in tRNA = N(6)-L-threonylcarbamoyladenosine(37) in tRNA + AMP + H(+). Functionally, required for the formation of a threonylcarbamoyl group on adenosine at position 37 (t(6)A37) in tRNAs that read codons beginning with adenine. Is involved in the transfer of the threonylcarbamoyl moiety of threonylcarbamoyl-AMP (TC-AMP) to the N6 group of A37, together with TsaE and TsaB. TsaD likely plays a direct catalytic role in this reaction. In Proteus mirabilis (strain HI4320), this protein is tRNA N6-adenosine threonylcarbamoyltransferase.